Reading from the N-terminus, the 106-residue chain is ER membrane protein complex subunit 5 (106 aa).

The Cytoplasmic segment spans residues 1–12; the sequence is MESSTINAKKIS. Residues 13–33 traverse the membrane as a helical segment; sequence VLLTLFSIIGYTAYSAHESIL. Residues 34 to 46 lie on the Lumenal side of the membrane; that stretch reads EIRQDGKLPLDIK. The chain crosses the membrane as a helical span at residues 47 to 67; it reads CEVILVTLLFTFTTVIIASPL. Residues 68–106 lie on the Cytoplasmic side of the membrane; it reads RSIQLNKWSHQRSDLAFLNSRTNFLRIKELKEKIEKVKN.

It belongs to the membrane magnesium transporter (TC 1.A.67) family. As to quaternary structure, component of the ER membrane protein complex (EMC).

Its subcellular location is the endoplasmic reticulum membrane. Its function is as follows. The EMC seems to be required for efficient folding of proteins in the endoplasmic reticulum (ER). The chain is ER membrane protein complex subunit 5 (emc5) from Schizosaccharomyces pombe (strain 972 / ATCC 24843) (Fission yeast).